A 214-amino-acid polypeptide reads, in one-letter code: MAEEVPSINIEEWKPRTSIGNLVKNGKISSIKELFDRNLPITEPEIVDVLLPKLKYEVVDIKVVQKQTDAGEISRYKVLVIMGNMDGYVSIGTGKAKQLRVAIQKAIRDAKMNILPVRRGCGSWQCTCGEPHSLPFKVVGKAGSVEVNLLPAPKGTGLVVGSVLKTLLTYAGIRDAWSTTKGETRTTENFVRAGYSALYNTYNFVTLQDWARKR.

Residues 54–117 (LKYEVVDIKV…RDAKMNILPV (64 aa)) enclose the S5 DRBM domain.

It belongs to the universal ribosomal protein uS5 family. As to quaternary structure, part of the 30S ribosomal subunit. Contacts protein S4.

In terms of biological role, with S4 and S12 plays an important role in translational accuracy. This chain is Small ribosomal subunit protein uS5, found in Saccharolobus islandicus (strain Y.N.15.51 / Yellowstone #2) (Sulfolobus islandicus).